We begin with the raw amino-acid sequence, 189 residues long: Large ribosomal subunit protein bL9 (189 aa).

The protein belongs to the bacterial ribosomal protein bL9 family.

In terms of biological role, binds to the 23S rRNA. This Brucella anthropi (strain ATCC 49188 / DSM 6882 / CCUG 24695 / JCM 21032 / LMG 3331 / NBRC 15819 / NCTC 12168 / Alc 37) (Ochrobactrum anthropi) protein is Large ribosomal subunit protein bL9.